We begin with the raw amino-acid sequence, 143 residues long: Agaricus bisporus lectin (143 aa).

Residues Ala29, Ser48, Gly49, and Asn73 each contribute to the beta-D-Gal-(1-&gt;3)-alpha-D-GalNAc site. Thr82, Arg103, and Tyr114 together coordinate N-acetyl-beta-D-glucosamine.

The protein belongs to the fungal fruit body lectin family. In terms of assembly, homotetramer.

In terms of biological role, lectin that recognizes O-linked galactose-beta-1,3-N-acetylgalactosamine, a disaccharide (Thomsen-Friedenreich antigen or T-disaccharide), present on cell surface glycoproteins. Can also bind galactose-beta-1,3-N-acetylglucosamine. Does not bind monosaccharides. Can be internalized by clathrin-coated vesicles after binding to surface glycoproteins. After internalization it inhibits nuclear import of nuclear localization signal dependent proteins. Inhibits proliferation of malignant cells without cytotoxicity for normal cells. The sequence is that of Agaricus bisporus lectin from Agaricus bisporus (White button mushroom).